The sequence spans 370 residues: Uroporphyrinogen decarboxylase (370 aa).

Substrate-binding positions include 29-33 (RQAGR), Asp79, Tyr155, Ser210, and His342.

Belongs to the uroporphyrinogen decarboxylase family. In terms of assembly, homodimer.

The protein resides in the cytoplasm. It catalyses the reaction uroporphyrinogen III + 4 H(+) = coproporphyrinogen III + 4 CO2. It participates in porphyrin-containing compound metabolism; protoporphyrin-IX biosynthesis; coproporphyrinogen-III from 5-aminolevulinate: step 4/4. Its function is as follows. Catalyzes the decarboxylation of four acetate groups of uroporphyrinogen-III to yield coproporphyrinogen-III. The sequence is that of Uroporphyrinogen decarboxylase from Variovorax paradoxus (strain S110).